The sequence spans 233 residues: Octanoyltransferase (233 aa).

The BPL/LPL catalytic domain occupies 34–212 (PDRPDVLLLL…AFAQTFELDL (179 aa)). Substrate is bound by residues 76 to 83 (RGGEVTHH), 143 to 145 (AIG), and 156 to 158 (GFA). Catalysis depends on Cys-174, which acts as the Acyl-thioester intermediate.

Belongs to the LipB family.

It localises to the cytoplasm. It carries out the reaction octanoyl-[ACP] + L-lysyl-[protein] = N(6)-octanoyl-L-lysyl-[protein] + holo-[ACP] + H(+). The protein operates within protein modification; protein lipoylation via endogenous pathway; protein N(6)-(lipoyl)lysine from octanoyl-[acyl-carrier-protein]: step 1/2. Catalyzes the transfer of endogenously produced octanoic acid from octanoyl-acyl-carrier-protein onto the lipoyl domains of lipoate-dependent enzymes. Lipoyl-ACP can also act as a substrate although octanoyl-ACP is likely to be the physiological substrate. The polypeptide is Octanoyltransferase (Synechococcus elongatus (strain ATCC 33912 / PCC 7942 / FACHB-805) (Anacystis nidulans R2)).